The sequence spans 192 residues: Mitochondrial import inner membrane translocase subunit Tim22 (192 aa).

Disulfide bonds link cysteine 67–cysteine 139 and cysteine 158–cysteine 177. 3 consecutive transmembrane segments (helical) span residues valine 72–isoleucine 92, tyrosine 123–valine 141, and alanine 168–aspartate 188.

This sequence belongs to the Tim17/Tim22/Tim23 family. In terms of assembly, component of the TIM22 complex, whose core is composed of TIMM22, associated with peripheral protein FXC1/TIMM10B and the 70 kDa heterohexamer. In most cases, the 70 kDa complex is composed of TIMM9 and TIMM10 (TIMM10A or TIMM10B). A small fraction of the 70 kDa complex is composed of TIMM8 (TIMM8A/DDP1 or TIMM8B/DDP2) and TIMM13. The TIM22 complex also contains AGK and TIMM29. Interacts directly with TIMM9, TIMM10A and FXC1/TIMM10B. Interacts (when oxidized) with TIMM29; interaction is direct. Post-translationally, disulfide bonds promote efficient assembly of the TIM22 complex.

It localises to the mitochondrion inner membrane. Functionally, essential core component of the TIM22 complex, a complex that mediates the import and insertion of multi-pass transmembrane proteins into the mitochondrial inner membrane. In the TIM22 complex, it constitutes the voltage-activated and signal-gated channel. Forms a twin-pore translocase that uses the membrane potential as external driving force in 2 voltage-dependent steps. This chain is Mitochondrial import inner membrane translocase subunit Tim22 (Timm22), found in Rattus norvegicus (Rat).